Consider the following 433-residue polypeptide: Evolutionarily conserved signaling intermediate in Toll pathway, mitochondrial (433 aa).

The N-terminal 48 residues, Met1–His48, are a transit peptide targeting the mitochondrion. Residues Gln36–Arg63 are disordered. A Glycyl lysine isopeptide (Lys-Gly) (interchain with G-Cter in ubiquitin) cross-link involves residue Lys372. The disordered stretch occupies residues Ser397–Ser433.

The protein belongs to the ECSIT family. In terms of assembly, interacts with MAP3K1, SMAD4 and TRAF6. Interacts with SMAD1 only after BMP4-treatment. Part of the mitochondrial complex I assembly/MCIA complex that comprises at least the core subunits TMEM126B, NDUFAF1, ECSIT and ACAD9 and complement subunits such as COA1 and TMEM186. Interacts with NDUFAF1. Interacts with ACAD9. Interacts with TRIM59. Interacts with TMEM70 and TMEM242. Interacts (when ubiquitinated) with NF-kappa-B subunits RELA and NFKB1. Interacts with RIGI, IFIT1 and MAVS; these interactions promote RLR-mediated type I IFN induction. Interacts with SQSTM1; this interaction inhibits TLR4 signaling via functional regulation of the TRAF6-ECSIT complex. Interacts with cereblon/CRBN; this interaction inhibits the ubiquitination of ECSIT. In terms of processing, ubiquitinated on Lys-372; leading to translocation in the nucleus together with RELA and NFKB1 and expression of NF-kappa-B-dependent genes.

Its subcellular location is the cytoplasm. It localises to the nucleus. The protein localises to the mitochondrion. Its function is as follows. Adapter protein that plays a role in different signaling pathways including TLRs and IL-1 pathways or innate antiviral induction signaling. Plays a role in the activation of NF-kappa-B by forming a signal complex with TRAF6 and TAK1/MAP3K7 to activate TAK1/MAP3K7 leading to activation of IKKs. Once ubiquitinated, interacts with the dissociated RELA and NFKB1 proteins and translocates to the nucleus where it induces NF-kappa-B-dependent gene expression. Plays a role in innate antiviral immune response by bridging the pattern recognition receptors RIGI and MDA5/IFIT1 to the MAVS complex at the mitochondrion. Promotes proteolytic activation of MAP3K1. Involved in the BMP signaling pathway. Required for normal embryonic development. Functionally, as part of the MCIA complex, involved in the assembly of the mitochondrial complex I. This chain is Evolutionarily conserved signaling intermediate in Toll pathway, mitochondrial, found in Bos taurus (Bovine).